Consider the following 1866-residue polypeptide: Rho GTPase-activating protein 100F (1866 aa).

Disordered regions lie at residues 22–98 (MLCC…AGVK), 262–336 (RRGN…NNYS), and 466–530 (LRSS…DTEA). Low complexity predominate over residues 59-77 (GNQQHHGNQQHHGNQQQHH). A PDZ domain is found at 179-264 (LVEIVKRPGQ…LVLAIRQRRG (86 aa)). Pro residues predominate over residues 271-286 (PGPPTLSRPEQKPPPV). The segment covering 301–326 (TDRMPRPRSSRDRRTGDGREMTESRS) has biased composition (basic and acidic residues). A Phosphoserine modification is found at serine 719. A disordered region spans residues 745–775 (AGPASPSGSILSTGGHQSPAPTPSATLPRPH). A compositionally biased stretch (polar residues) spans 750 to 760 (PSGSILSTGGH). The C2 domain occupies 789-908 (KLDKPIVDIG…LRQSPLHQLA (120 aa)). A Rho-GAP domain is found at 948–1148 (ADLETVVNRE…YLLQIWPQPQ (201 aa)). Disordered stretches follow at residues 1273 to 1328 (GGSV…QVKI), 1356 to 1380 (PTTQ…RRGN), 1393 to 1479 (SVVN…DLVS), 1514 to 1607 (FTPI…MVST), 1644 to 1727 (YTND…YGTL), and 1819 to 1840 (DEKP…ADKG). Positions 1282 to 1292 (DPSPLPLPGTP) are enriched in pro residues. The segment covering 1293–1302 (SPGSSSASTG) has biased composition (low complexity). Composition is skewed to polar residues over residues 1356–1377 (PTTQ…TASR), 1393–1408 (SVVN…YTGS), and 1416–1429 (GNSS…NASG). The segment covering 1443–1479 (SSATSSSSSSQATVLSAGSTATSAPTTSSDDSDDLVS) has biased composition (low complexity). Polar residues predominate over residues 1538 to 1587 (QLVTPISGSSSKPGATTGAISKYTTGSVESSINANSQKLSSPSRLCNSKD). Composition is skewed to low complexity over residues 1590–1607 (SRTG…MVST) and 1644–1658 (YTND…SSKS). Residues 1659–1670 (GIGGGSGTGLGA) are compositionally biased toward gly residues. Composition is skewed to low complexity over residues 1671–1688 (VSGA…LFGS) and 1696–1720 (GSSH…NHNT). Residues 1830–1839 (HGEEKLGADK) are compositionally biased toward basic and acidic residues.

In terms of assembly, interacts (via PDZ domain) with Nrx-1; may recruit Nrx-1 to the presynaptic active zone.

Its subcellular location is the presynapse. Its function is as follows. GTPase activator for the Rho-type GTPases by converting them to an inactive GDP-bound state. Promotes the anchoring of Liprin-alpha clusters at synapses. Recruits and keeps Nrx-1 levels high in active zones in the presynapse opposite the postsynaptic region. The sequence is that of Rho GTPase-activating protein 100F (RhoGAP100F) from Drosophila melanogaster (Fruit fly).